The chain runs to 346 residues: Phosphate acyltransferase (346 aa).

It belongs to the PlsX family. In terms of assembly, homodimer. Probably interacts with PlsY.

The protein resides in the cytoplasm. It carries out the reaction a fatty acyl-[ACP] + phosphate = an acyl phosphate + holo-[ACP]. Its pathway is lipid metabolism; phospholipid metabolism. Functionally, catalyzes the reversible formation of acyl-phosphate (acyl-PO(4)) from acyl-[acyl-carrier-protein] (acyl-ACP). This enzyme utilizes acyl-ACP as fatty acyl donor, but not acyl-CoA. In Brucella suis biovar 1 (strain 1330), this protein is Phosphate acyltransferase.